A 388-amino-acid polypeptide reads, in one-letter code: Succinate--CoA ligase [ADP-forming] subunit beta (388 aa).

One can recognise an ATP-grasp domain in the interval 9-244 (KQLFAEYGLP…PSQDDAREAH (236 aa)). ATP contacts are provided by residues Lys46, 53-55 (GRG), Glu99, Thr102, and Glu107. Positions 199 and 213 each coordinate Mg(2+). Substrate contacts are provided by residues Asn264 and 321–323 (GIV).

Belongs to the succinate/malate CoA ligase beta subunit family. In terms of assembly, heterotetramer of two alpha and two beta subunits. Mg(2+) serves as cofactor.

It carries out the reaction succinate + ATP + CoA = succinyl-CoA + ADP + phosphate. The catalysed reaction is GTP + succinate + CoA = succinyl-CoA + GDP + phosphate. The protein operates within carbohydrate metabolism; tricarboxylic acid cycle; succinate from succinyl-CoA (ligase route): step 1/1. Its function is as follows. Succinyl-CoA synthetase functions in the citric acid cycle (TCA), coupling the hydrolysis of succinyl-CoA to the synthesis of either ATP or GTP and thus represents the only step of substrate-level phosphorylation in the TCA. The beta subunit provides nucleotide specificity of the enzyme and binds the substrate succinate, while the binding sites for coenzyme A and phosphate are found in the alpha subunit. In Pseudomonas aeruginosa (strain UCBPP-PA14), this protein is Succinate--CoA ligase [ADP-forming] subunit beta.